Here is a 68-residue protein sequence, read N- to C-terminus: Large ribosomal subunit protein uL29 (68 aa).

This sequence belongs to the universal ribosomal protein uL29 family.

The protein is Large ribosomal subunit protein uL29 of Albidiferax ferrireducens (strain ATCC BAA-621 / DSM 15236 / T118) (Rhodoferax ferrireducens).